A 453-amino-acid polypeptide reads, in one-letter code: uncharacterized protein (453 aa).

It to S.faecalis plasmid PAM373 EP0012.

This is an uncharacterized protein from Listeria innocua serovar 6a (strain ATCC BAA-680 / CLIP 11262).